The primary structure comprises 933 residues: 2-oxoglutarate dehydrogenase E1 component (933 aa).

It belongs to the alpha-ketoglutarate dehydrogenase family. As to quaternary structure, homodimer. Part of the 2-oxoglutarate dehydrogenase (OGDH) complex composed of E1 (2-oxoglutarate dehydrogenase), E2 (dihydrolipoamide succinyltransferase) and E3 (dihydrolipoamide dehydrogenase); the complex contains multiple copies of the three enzymatic components (E1, E2 and E3). It depends on thiamine diphosphate as a cofactor.

It carries out the reaction N(6)-[(R)-lipoyl]-L-lysyl-[protein] + 2-oxoglutarate + H(+) = N(6)-[(R)-S(8)-succinyldihydrolipoyl]-L-lysyl-[protein] + CO2. Its function is as follows. E1 component of the 2-oxoglutarate dehydrogenase (OGDH) complex which catalyzes the decarboxylation of 2-oxoglutarate, the first step in the conversion of 2-oxoglutarate to succinyl-CoA and CO(2). This Staphylococcus saprophyticus subsp. saprophyticus (strain ATCC 15305 / DSM 20229 / NCIMB 8711 / NCTC 7292 / S-41) protein is 2-oxoglutarate dehydrogenase E1 component.